Reading from the N-terminus, the 222-residue chain is Deoxyribose-phosphate aldolase (222 aa).

D93 acts as the Proton donor/acceptor in catalysis. K156 acts as the Schiff-base intermediate with acetaldehyde in catalysis. The Proton donor/acceptor role is filled by K186.

Belongs to the DeoC/FbaB aldolase family. DeoC type 1 subfamily.

The protein localises to the cytoplasm. The catalysed reaction is 2-deoxy-D-ribose 5-phosphate = D-glyceraldehyde 3-phosphate + acetaldehyde. The protein operates within carbohydrate degradation; 2-deoxy-D-ribose 1-phosphate degradation; D-glyceraldehyde 3-phosphate and acetaldehyde from 2-deoxy-alpha-D-ribose 1-phosphate: step 2/2. Catalyzes a reversible aldol reaction between acetaldehyde and D-glyceraldehyde 3-phosphate to generate 2-deoxy-D-ribose 5-phosphate. The chain is Deoxyribose-phosphate aldolase from Nocardia farcinica (strain IFM 10152).